Consider the following 243-residue polypeptide: DNA repair protein RecO (243 aa).

This sequence belongs to the RecO family.

In terms of biological role, involved in DNA repair and RecF pathway recombination. This chain is DNA repair protein RecO, found in Geobacter sulfurreducens (strain ATCC 51573 / DSM 12127 / PCA).